The sequence spans 436 residues: GTPase Der (436 aa).

2 consecutive EngA-type G domains span residues 4–167 and 175–351; these read PTVA…PVEE and IRFS…ESQN. Residues 10–17, 57–61, 119–122, 181–188, 229–233, and 294–297 contribute to the GTP site; these read GRPNVGKS, DTGGI, NKVD, DTAGM, and NKWD. One can recognise a KH-like domain in the interval 352 to 436; that stretch reads KRIPSAVLND…PINLIARKRK (85 aa).

The protein belongs to the TRAFAC class TrmE-Era-EngA-EngB-Septin-like GTPase superfamily. EngA (Der) GTPase family. Associates with the 50S ribosomal subunit.

In terms of biological role, GTPase that plays an essential role in the late steps of ribosome biogenesis. The chain is GTPase Der from Streptococcus agalactiae serotype III (strain NEM316).